The chain runs to 374 residues: Succinyl-diaminopimelate desuccinylase (374 aa).

H66 provides a ligand contact to Zn(2+). D68 is a catalytic residue. D99 provides a ligand contact to Zn(2+). The Proton acceptor role is filled by E133. Positions 134, 162, and 348 each coordinate Zn(2+).

This sequence belongs to the peptidase M20A family. DapE subfamily. As to quaternary structure, homodimer. It depends on Zn(2+) as a cofactor. Co(2+) is required as a cofactor.

It carries out the reaction N-succinyl-(2S,6S)-2,6-diaminopimelate + H2O = (2S,6S)-2,6-diaminopimelate + succinate. It functions in the pathway amino-acid biosynthesis; L-lysine biosynthesis via DAP pathway; LL-2,6-diaminopimelate from (S)-tetrahydrodipicolinate (succinylase route): step 3/3. Catalyzes the hydrolysis of N-succinyl-L,L-diaminopimelic acid (SDAP), forming succinate and LL-2,6-diaminopimelate (DAP), an intermediate involved in the bacterial biosynthesis of lysine and meso-diaminopimelic acid, an essential component of bacterial cell walls. The polypeptide is Succinyl-diaminopimelate desuccinylase (Coxiella burnetii (strain CbuK_Q154) (Coxiella burnetii (strain Q154))).